The following is a 313-amino-acid chain: MKEKIVIALGGNAIQTKEATAEAQQTAIRRAMQNLKPLFDSPARIVISHGNGPQIGSLLIQQAKSNSDTTPAMPLDTCGAMSQGMIGYWLETEINRILTEMNSDRTVGTIVTRVEVDKNDPRFDNPTKPIGPFYTKEEVEELQKEQPDSVFKEDAGRGYRKVVASPLPQSILEHQLIRTLADGKNIVIACGGGGIPVIKKENTYEGVEAVIDKDFASEKLATLIEADTLMILTNVENVFINFNEPNQQQIDDIDVATLKKYVAQGKFAEGSMLPKIEAAIRFVESGENKKVIITNLEQAYEALIGNKGTHIHM.

This sequence belongs to the carbamate kinase family.

It is found in the cytoplasm. The catalysed reaction is hydrogencarbonate + NH4(+) + ATP = carbamoyl phosphate + ADP + H2O + H(+). It functions in the pathway metabolic intermediate metabolism; carbamoyl phosphate degradation; CO(2) and NH(3) from carbamoyl phosphate: step 1/1. The sequence is that of Carbamate kinase 2 (arcC2) from Staphylococcus aureus (strain bovine RF122 / ET3-1).